A 333-amino-acid chain; its full sequence is HTH-type transcriptional regulator Cphy_2742 (333 aa).

The region spanning 1–55 is the HTH lacI-type domain; sequence MNIYDVSQKAGVSIATVSRVINGNPNVSEKTKQKVLDVMKEIGYTPNVFARGLGL. The H-T-H motif DNA-binding region spans 3 to 22; the sequence is IYDVSQKAGVSIATVSRVIN.

It localises to the cytoplasm. Its function is as follows. Involved in control of pectin and galacturonic acid metabolism. Probably represses a comprehensive set of pectin fermentation genes by binding a conserved palindrome at or downstream of their transcription start site to block transcription. In the presence of galacturonic acid may activate transcription of acetate synthesis and other aspects of carbon metabolism. The chain is HTH-type transcriptional regulator Cphy_2742 from Lachnoclostridium phytofermentans (strain ATCC 700394 / DSM 18823 / ISDg) (Clostridium phytofermentans).